The following is a 141-amino-acid chain: Hemoglobin subunit alpha (141 aa).

The Globin domain maps to 1–141; that stretch reads VLSPADKTNV…VSTVLTSKYR (141 aa). A Phosphoserine modification is found at Ser-3. At Lys-7 the chain carries N6-succinyllysine. Thr-8 carries the post-translational modification Phosphothreonine. An N6-succinyllysine modification is found at Lys-11. Lys-16 is modified (N6-acetyllysine; alternate). Lys-16 carries the N6-succinyllysine; alternate modification. Tyr-24 carries the phosphotyrosine modification. At Lys-40 the chain carries N6-succinyllysine. Phosphoserine is present on Ser-49. Residue His-58 coordinates O2. His-87 is a binding site for heme b. A Phosphoserine modification is found at Ser-102. Thr-108 is subject to Phosphothreonine. Residue Ser-124 is modified to Phosphoserine. Phosphothreonine occurs at positions 134 and 137. Ser-138 carries the phosphoserine modification.

It belongs to the globin family. Heterotetramer of two alpha chains and two beta chains. Red blood cells.

Involved in oxygen transport from the lung to the various peripheral tissues. Functionally, hemopressin acts as an antagonist peptide of the cannabinoid receptor CNR1. Hemopressin-binding efficiently blocks cannabinoid receptor CNR1 and subsequent signaling. This is Hemoglobin subunit alpha (HBA) from Phoca vitulina (Harbor seal).